The following is a 101-amino-acid chain: Gastrin (101 aa).

Residues 1–21 (MQRLCVYVLIFALALAAFSEA) form the signal peptide. A disordered region spans residues 22 to 82 (SWKPRSQQPD…SKKQGPWLEE (61 aa)). Residue glutamine 59 is modified to Pyrrolidone carboxylic acid; in form big gastrin. Glutamine 76 is subject to Pyrrolidone carboxylic acid; in form gastrin. Tyrosine 87 bears the Sulfotyrosine; partial mark. The residue at position 92 (phenylalanine 92) is a Phenylalanine amide. Serine 96 is modified (phosphoserine). Positions 96–101 (SAEDEN) are cleaved as a propeptide — removed in mature form.

Belongs to the gastrin/cholecystokinin family. Post-translationally, two different processing pathways probably exist in antral G-cells. In the dominant pathway progastrin is cleaved at three sites resulting in two major bioactive gastrins, gastrin-34 and gastrin-17. In the putative alternative pathway, progastrin may be processed only at the most C-terminal dibasic site resulting in the synthesis of gastrin-71. Sulfation enhances proteolytic processing, and blocks peptide degradation. Levels of sulfation differ between proteolytically-cleaved gastrins. Thus, gastrin-6 is almost 73% sulfated, whereas the larger gastrins are less than 50% sulfated. Sulfation levels are also tissue-specific.

Its subcellular location is the secreted. Functionally, gastrin stimulates the stomach mucosa to produce and secrete hydrochloric acid and the pancreas to secrete its digestive enzymes. It also stimulates smooth muscle contraction and increases blood circulation and water secretion in the stomach and intestine. In Homo sapiens (Human), this protein is Gastrin (GAST).